A 123-amino-acid polypeptide reads, in one-letter code: Small ribosomal subunit protein uS12 (123 aa).

Aspartate 89 is subject to 3-methylthioaspartic acid.

This sequence belongs to the universal ribosomal protein uS12 family. In terms of assembly, part of the 30S ribosomal subunit. Contacts proteins S8 and S17. May interact with IF1 in the 30S initiation complex.

Its function is as follows. With S4 and S5 plays an important role in translational accuracy. In terms of biological role, interacts with and stabilizes bases of the 16S rRNA that are involved in tRNA selection in the A site and with the mRNA backbone. Located at the interface of the 30S and 50S subunits, it traverses the body of the 30S subunit contacting proteins on the other side and probably holding the rRNA structure together. The combined cluster of proteins S8, S12 and S17 appears to hold together the shoulder and platform of the 30S subunit. The protein is Small ribosomal subunit protein uS12 of Afipia carboxidovorans (strain ATCC 49405 / DSM 1227 / KCTC 32145 / OM5) (Oligotropha carboxidovorans).